A 154-amino-acid polypeptide reads, in one-letter code: 6,7-dimethyl-8-ribityllumazine synthase (154 aa).

5-amino-6-(D-ribitylamino)uracil contacts are provided by residues Phe-22, 56-58, and 80-82; these read SFE and AVI. 85–86 is a binding site for (2S)-2-hydroxy-3-oxobutyl phosphate; sequence ST. His-88 acts as the Proton donor in catalysis. Tyr-113 contributes to the 5-amino-6-(D-ribitylamino)uracil binding site. Arg-127 contacts (2S)-2-hydroxy-3-oxobutyl phosphate.

This sequence belongs to the DMRL synthase family. Forms an icosahedral capsid composed of 60 subunits, arranged as a dodecamer of pentamers.

It catalyses the reaction (2S)-2-hydroxy-3-oxobutyl phosphate + 5-amino-6-(D-ribitylamino)uracil = 6,7-dimethyl-8-(1-D-ribityl)lumazine + phosphate + 2 H2O + H(+). Its pathway is cofactor biosynthesis; riboflavin biosynthesis; riboflavin from 2-hydroxy-3-oxobutyl phosphate and 5-amino-6-(D-ribitylamino)uracil: step 1/2. Its function is as follows. Catalyzes the formation of 6,7-dimethyl-8-ribityllumazine by condensation of 5-amino-6-(D-ribitylamino)uracil with 3,4-dihydroxy-2-butanone 4-phosphate. This is the penultimate step in the biosynthesis of riboflavin. In Persephonella marina (strain DSM 14350 / EX-H1), this protein is 6,7-dimethyl-8-ribityllumazine synthase.